The primary structure comprises 205 residues: Outer-membrane lipoprotein LolB (205 aa).

The signal sequence occupies residues 1–17 (MFLRHVIVFSLIALLTG). C18 is lipidated: N-palmitoyl cysteine. C18 is lipidated: S-diacylglycerol cysteine.

The protein belongs to the LolB family. Monomer.

The protein resides in the cell outer membrane. Its function is as follows. Plays a critical role in the incorporation of lipoproteins in the outer membrane after they are released by the LolA protein. This is Outer-membrane lipoprotein LolB from Pseudomonas syringae pv. syringae (strain B728a).